Here is a 398-residue protein sequence, read N- to C-terminus: Bifunctional enzyme IspD/IspF (398 aa).

Residues 1–234 (MTNSPRTAAI…SRLMAALGDI (234 aa)) form a 2-C-methyl-D-erythritol 4-phosphate cytidylyltransferase region. Residues 235–398 (RTGTGYDVHA…LPWGADGLAG (164 aa)) are 2-C-methyl-D-erythritol 2,4-cyclodiphosphate synthase. A divalent metal cation contacts are provided by Asp241 and His243. Residues 241 to 243 (DVH) and 267 to 268 (HS) contribute to the 4-CDP-2-C-methyl-D-erythritol 2-phosphate site. Residue His275 coordinates a divalent metal cation. Residues 289 to 291 (DIG), 365 to 368 (TTSE), Phe372, and Arg375 contribute to the 4-CDP-2-C-methyl-D-erythritol 2-phosphate site.

It in the N-terminal section; belongs to the IspD/TarI cytidylyltransferase family. IspD subfamily. The protein in the C-terminal section; belongs to the IspF family. A divalent metal cation is required as a cofactor.

It catalyses the reaction 2-C-methyl-D-erythritol 4-phosphate + CTP + H(+) = 4-CDP-2-C-methyl-D-erythritol + diphosphate. The catalysed reaction is 4-CDP-2-C-methyl-D-erythritol 2-phosphate = 2-C-methyl-D-erythritol 2,4-cyclic diphosphate + CMP. It participates in isoprenoid biosynthesis; isopentenyl diphosphate biosynthesis via DXP pathway; isopentenyl diphosphate from 1-deoxy-D-xylulose 5-phosphate: step 2/6. Its pathway is isoprenoid biosynthesis; isopentenyl diphosphate biosynthesis via DXP pathway; isopentenyl diphosphate from 1-deoxy-D-xylulose 5-phosphate: step 4/6. Functionally, bifunctional enzyme that catalyzes the formation of 4-diphosphocytidyl-2-C-methyl-D-erythritol from CTP and 2-C-methyl-D-erythritol 4-phosphate (MEP) (IspD), and catalyzes the conversion of 4-diphosphocytidyl-2-C-methyl-D-erythritol 2-phosphate (CDP-ME2P) to 2-C-methyl-D-erythritol 2,4-cyclodiphosphate (ME-CPP) with a corresponding release of cytidine 5-monophosphate (CMP) (IspF). The protein is Bifunctional enzyme IspD/IspF of Rhodopseudomonas palustris (strain ATCC BAA-98 / CGA009).